We begin with the raw amino-acid sequence, 513 residues long: Pleiotropic regulator 1 (513 aa).

The residue at position 1 (methionine 1) is an N-acetylmethionine. Residues serine 119 and serine 200 each carry the phosphoserine modification. WD repeat units follow at residues 201-240, 243-282, 285-324, 327-366, 369-409, 410-448, and 459-498; these read GHLG…LKLS, GHIS…VIRH, GHLS…SVHT, GHTN…TRVT, NHKK…QNLS, GHNA…NFQR, and DSES…TEET. A Phosphoserine modification is found at serine 390.

Belongs to the WD repeat PRL1/PRL2 family. As to quaternary structure, identified in the spliceosome C complex. Component of the PRP19-CDC5L splicing complex composed of a core complex comprising a homotetramer of PRPF19, CDC5L, PLRG1 and BCAS2, and at least three less stably associated proteins CTNNBL1, CWC15 and HSPA8. Interacts (via its WD40 repeat domain) directly with CDC5L (via its C-terminal); the interaction is required for mRNA splicing but not for spliceosome assembly. Component of the minor spliceosome, which splices U12-type introns. Within this complex, interacts with CRIPT. Also interacts directly in the complex with BCAS2 and PRPF19. Interacts with USB1.

Its subcellular location is the nucleus. The protein resides in the nucleus speckle. In terms of biological role, involved in pre-mRNA splicing as component of the spliceosome. Component of the PRP19-CDC5L complex that forms an integral part of the spliceosome and is required for activating pre-mRNA splicing. As a component of the minor spliceosome, involved in the splicing of U12-type introns in pre-mRNAs. The chain is Pleiotropic regulator 1 (PLRG1) from Bos taurus (Bovine).